Here is a 641-residue protein sequence, read N- to C-terminus: DNA primase (641 aa).

The CHC2-type zinc-finger motif lies at 41 to 65 (CPFHDEKSPSFQVSPSKGFFHCFGC). Residues 262–346 (SRAVVVEGYT…AAETYIAIAP (85 aa)) form the Toprim domain. Mg(2+) contacts are provided by Glu268, Asp317, and Asp319. The interval 444–478 (RDRGGKGPAPDQRQRGGGPQQQAGPMTATPRGPAL) is disordered.

It belongs to the DnaG primase family. In terms of assembly, monomer. Interacts with DnaB. It depends on Zn(2+) as a cofactor. Mg(2+) serves as cofactor.

It catalyses the reaction ssDNA + n NTP = ssDNA/pppN(pN)n-1 hybrid + (n-1) diphosphate.. In terms of biological role, RNA polymerase that catalyzes the synthesis of short RNA molecules used as primers for DNA polymerase during DNA replication. This Streptomyces coelicolor (strain ATCC BAA-471 / A3(2) / M145) protein is DNA primase.